The sequence spans 255 residues: MLQVEGLYLCRGSNEVLHDIHLQLPPGQVVGVLGPNGAGKSSLLSVLCGELAPDRGRVTLQGRPLADWAGQERARRLAVLPQVSSLGFSFRVEEVVGMGRMPHGTGQRRDAEIVEAALRAADAWHLVARSYLALSGGERQRVHLARVLAQLWPGEEGSTLLLDEPTSMLDPLHQHTTLEAVRRFADCGAAVLVILHDLNLAARYCDRILLLEQGRCHAFATPEAALTPAALKAVYGIDVLVQAHPERGHPLIITR.

In terms of domain architecture, ABC transporter spans Leu-2 to Asp-238. Gly-34 to Ser-41 is a binding site for ATP.

It belongs to the ABC transporter superfamily. Heme (hemin) importer (TC 3.A.1.14.5) family. In terms of assembly, the complex is composed of two ATP-binding proteins (HmuV), two transmembrane proteins (HmuU) and a solute-binding protein (HmuT).

The protein resides in the cell inner membrane. Functionally, part of the ABC transporter complex HmuTUV involved in hemin import. Responsible for energy coupling to the transport system. This is Hemin import ATP-binding protein HmuV from Pseudomonas putida (strain ATCC 47054 / DSM 6125 / CFBP 8728 / NCIMB 11950 / KT2440).